The chain runs to 176 residues: Photosystem I assembly protein Ycf4 (176 aa).

The next 2 helical transmembrane spans lie at 22–42 (FLWA…GTAS) and 57–77 (VMTF…SMLF).

Belongs to the Ycf4 family.

It is found in the plastid thylakoid membrane. Functionally, seems to be required for the assembly of the photosystem I complex. This chain is Photosystem I assembly protein Ycf4, found in Cuscuta obtusiflora (Peruvian dodder).